The primary structure comprises 79 residues: Defensin-like protein 3 (79 aa).

The first 29 residues, Met-1–Ala-29, serve as a signal peptide directing secretion. Cystine bridges form between Cys-32–Cys-79, Cys-43–Cys-64, Cys-49–Cys-73, and Cys-53–Cys-75.

This sequence belongs to the DEFL family.

It localises to the secreted. Its function is as follows. Possesses antifungal activity sensitive to inorganic cations. The protein is Defensin-like protein 3 (AFP3) of Raphanus sativus (Radish).